A 236-amino-acid polypeptide reads, in one-letter code: DNA repair protein RecO (236 aa).

The protein belongs to the RecO family.

Functionally, involved in DNA repair and RecF pathway recombination. This chain is DNA repair protein RecO, found in Rickettsia typhi (strain ATCC VR-144 / Wilmington).